The primary structure comprises 562 residues: Potassium-transporting ATPase potassium-binding subunit (562 aa).

12 helical membrane-spanning segments follow: residues 6–26, 63–83, 132–152, 175–195, 253–273, 283–303, 327–347, 356–376, 379–399, 416–436, 483–503, and 526–546; these read FLLI…LGGF, ALAI…LLMA, GLTV…FALI, LYVL…QGVL, FVQM…FGQV, LIWA…YAEL, FGIL…CGAV, ALGG…FGGV, GLYG…LMIG, MTAL…ALAL, LLLA…VLAI, and LFIG…FIPA.

The protein belongs to the KdpA family. The system is composed of three essential subunits: KdpA, KdpB and KdpC.

It localises to the cell inner membrane. Part of the high-affinity ATP-driven potassium transport (or Kdp) system, which catalyzes the hydrolysis of ATP coupled with the electrogenic transport of potassium into the cytoplasm. This subunit binds the periplasmic potassium ions and delivers the ions to the membrane domain of KdpB through an intramembrane tunnel. This chain is Potassium-transporting ATPase potassium-binding subunit, found in Yersinia pseudotuberculosis serotype O:1b (strain IP 31758).